A 172-amino-acid chain; its full sequence is MSKDTAIFAGGCFWCMVEPFDKMPGIISVRSGYTGGFVENPTYEQVCSHTTGHTEAVKIVFDPEIISYAELVNIYWRQTDPTDAMGQFQDRGDSYRPVIFVHDEEQRKIAEESKKALAESGEFDKPIVTQIEDAKPFYEAEEYHQDFYKKNPERYALEEMGGREQFRNQHWN.

Cysteine 12 is a catalytic residue.

Belongs to the MsrA Met sulfoxide reductase family.

It carries out the reaction L-methionyl-[protein] + [thioredoxin]-disulfide + H2O = L-methionyl-(S)-S-oxide-[protein] + [thioredoxin]-dithiol. The catalysed reaction is [thioredoxin]-disulfide + L-methionine + H2O = L-methionine (S)-S-oxide + [thioredoxin]-dithiol. Has an important function as a repair enzyme for proteins that have been inactivated by oxidation. Catalyzes the reversible oxidation-reduction of methionine sulfoxide in proteins to methionine. In Ligilactobacillus salivarius (strain UCC118) (Lactobacillus salivarius), this protein is Peptide methionine sulfoxide reductase MsrA.